The sequence spans 726 residues: Mitotic spindle checkpoint protein MAD1 (726 aa).

A disordered region spans residues 1-30 (MILRTPQPKRLRSDAGESPFPTGATGSGNQ). Coiled-coil stretches lie at residues 68–246 (ADVL…LKLI) and 272–625 (SDNS…VFAD).

Belongs to the MAD1 family. In terms of assembly, homodimer. Part of the mitotic checkpoint complex (MCC). Interacts with MAD2 and NUA.

It localises to the nucleus envelope. Its function is as follows. Required for the execution of the mitotic checkpoint which monitors the process of kinetochore-spindle attachment and delays the onset of anaphase when this process is not complete. It inhibits the activity of the anaphase promoting complex by sequestering CDC20 until all chromosomes are aligned at the metaphase plate. Required for anchoring MAD2 to the nuclear envelope. This is Mitotic spindle checkpoint protein MAD1 from Arabidopsis thaliana (Mouse-ear cress).